Reading from the N-terminus, the 227-residue chain is Basic leucine zipper 24 (227 aa).

Residues 44-68 are disordered; the sequence is EDKDQDRVTRGCSHTHSCNPPGPED. In terms of domain architecture, bZIP spans 94 to 160; it reads DSSNKKRLCG…IRLRALLVEM (67 aa). Positions 98–118 are basic motif; sequence KKRLCGNREAVRKYREKKKAR. A leucine-zipper region spans residues 122 to 129; sequence LEDEVMRL.

In terms of assembly, homodimer. In terms of tissue distribution, expressed in young leaves and cauline leaves.

It localises to the nucleus. The protein resides in the cytoplasm. Functionally, transcription factor involved in the regulation of salt stress response. Functions as a negative transcriptional regulator of salt stress acclimation response by regulating cation homeostasis. Negatively regulates the expression of genes contributing to ion and osmotic homeostasis during salt stress, such as the Na(+) transporter HKT1, the Na(+)/H(+) antiporter SOS1, the aquaporin PIP2-1 and the glutamine synthetase GLN1-3. In addition, targets genes with functions in plant growth and development, such as argonaute 4 (AGO4) and cyclophilin 19 (CYP19). This Arabidopsis thaliana (Mouse-ear cress) protein is Basic leucine zipper 24.